A 642-amino-acid polypeptide reads, in one-letter code: Threonine--tRNA ligase (642 aa).

The region spanning 1–61 is the TGS domain; that stretch reads MPVITITNGL…MQDSKLDIIT (61 aa). Residues 243 to 534 form a catalytic region; sequence DHRKIGQQLD…LIEEYAGFFP (292 aa). 3 residues coordinate Zn(2+): C334, H385, and H511.

This sequence belongs to the class-II aminoacyl-tRNA synthetase family. As to quaternary structure, homodimer. Zn(2+) serves as cofactor.

Its subcellular location is the cytoplasm. It carries out the reaction tRNA(Thr) + L-threonine + ATP = L-threonyl-tRNA(Thr) + AMP + diphosphate + H(+). Catalyzes the attachment of threonine to tRNA(Thr) in a two-step reaction: L-threonine is first activated by ATP to form Thr-AMP and then transferred to the acceptor end of tRNA(Thr). Also edits incorrectly charged L-seryl-tRNA(Thr). The polypeptide is Threonine--tRNA ligase (Baumannia cicadellinicola subsp. Homalodisca coagulata).